The sequence spans 1392 residues: DNA-directed RNA polymerase subunit beta'' (1392 aa).

Zn(2+) contacts are provided by C224, C295, C302, and C305.

The protein belongs to the RNA polymerase beta' chain family. RpoC2 subfamily. In terms of assembly, in plastids the minimal PEP RNA polymerase catalytic core is composed of four subunits: alpha, beta, beta', and beta''. When a (nuclear-encoded) sigma factor is associated with the core the holoenzyme is formed, which can initiate transcription. Zn(2+) is required as a cofactor.

It is found in the plastid. The protein resides in the chloroplast. The enzyme catalyses RNA(n) + a ribonucleoside 5'-triphosphate = RNA(n+1) + diphosphate. Functionally, DNA-dependent RNA polymerase catalyzes the transcription of DNA into RNA using the four ribonucleoside triphosphates as substrates. This is DNA-directed RNA polymerase subunit beta'' from Nicotiana tomentosiformis (Tobacco).